The sequence spans 293 residues: Putative phosphoenolpyruvate synthase regulatory protein (293 aa).

173–180 provides a ligand contact to ADP; the sequence is GVSRCGKT.

It belongs to the pyruvate, phosphate/water dikinase regulatory protein family. PSRP subfamily.

It carries out the reaction [pyruvate, water dikinase] + ADP = [pyruvate, water dikinase]-phosphate + AMP + H(+). The catalysed reaction is [pyruvate, water dikinase]-phosphate + phosphate + H(+) = [pyruvate, water dikinase] + diphosphate. Functionally, bifunctional serine/threonine kinase and phosphorylase involved in the regulation of the phosphoenolpyruvate synthase (PEPS) by catalyzing its phosphorylation/dephosphorylation. The polypeptide is Putative phosphoenolpyruvate synthase regulatory protein (Photorhabdus laumondii subsp. laumondii (strain DSM 15139 / CIP 105565 / TT01) (Photorhabdus luminescens subsp. laumondii)).